Consider the following 383-residue polypeptide: MAAPARTAPEDDASAVLDELSRNFTYWAPGPGNGSLSSAWYRRNQIHLFGVLLAILGNLVISISLNIQKYSHLHLAQKEHPKPYFKSVLWLSGVLLTALGETGNFAAYGVAPITLIAPLGCMSVTGSAIISVLFLKENLRASDLLGMTLAFAGTYLLVNFAPNITQAISARTVQYYFVGWQFLVYVILEILVFCILLYFHKRKGMKHIVVLLTLVALLASLTVISVKAVSGMITLSVTGKMQLTYAIFYIMLVIMIASCVFQVKFLNQATELYTMTTVVPVNHVFFTTSAIIAGIIFYQEFLGAAFLTVFIYLFGCFLSFLGVFLVTRNREKEHLQQSFVDLGDIPGKQMLDKVQPDSNGLSYGTLPDGGDSTRGQCGEKKES.

Residues N23 and N33 are each glycosylated (N-linked (GlcNAc...) asparagine). 9 helical membrane passes run 46–66 (IHLF…ISLN), 88–108 (VLWL…FAAY), 115–135 (LIAP…VLFL), 144–164 (LLGM…APNI), 177–197 (FVGW…CILL), 208–228 (IVVL…SVKA), 243–263 (LTYA…VFQV), 278–298 (VVPV…IIFY), and 306–326 (FLTV…VFLV). Residues 352 to 383 (DKVQPDSNGLSYGTLPDGGDSTRGQCGEKKES) form a disordered region.

The protein belongs to the NIPA family.

The protein localises to the membrane. The sequence is that of NIPA-like protein 2 (Nipal2) from Mus musculus (Mouse).